The primary structure comprises 426 residues: Enolase (426 aa).

Residue Gln-163 coordinates (2R)-2-phosphoglycerate. Residue Glu-205 is the Proton donor of the active site. Positions 242, 283, and 310 each coordinate Mg(2+). The (2R)-2-phosphoglycerate site is built by Lys-335, Arg-364, Ser-365, and Lys-386. The active-site Proton acceptor is Lys-335.

It belongs to the enolase family. Mg(2+) serves as cofactor.

Its subcellular location is the cytoplasm. The protein localises to the secreted. The protein resides in the cell surface. The catalysed reaction is (2R)-2-phosphoglycerate = phosphoenolpyruvate + H2O. It participates in carbohydrate degradation; glycolysis; pyruvate from D-glyceraldehyde 3-phosphate: step 4/5. Catalyzes the reversible conversion of 2-phosphoglycerate (2-PG) into phosphoenolpyruvate (PEP). It is essential for the degradation of carbohydrates via glycolysis. The protein is Enolase of Clavibacter michiganensis subsp. michiganensis (strain NCPPB 382).